The sequence spans 702 residues: Ribosomal RNA large subunit methyltransferase K/L (702 aa).

One can recognise a THUMP domain in the interval 43–154 (LVYQSLMWSR…KETASIALDL (112 aa)).

This sequence belongs to the methyltransferase superfamily. RlmKL family.

The protein localises to the cytoplasm. It catalyses the reaction guanosine(2445) in 23S rRNA + S-adenosyl-L-methionine = N(2)-methylguanosine(2445) in 23S rRNA + S-adenosyl-L-homocysteine + H(+). It carries out the reaction guanosine(2069) in 23S rRNA + S-adenosyl-L-methionine = N(2)-methylguanosine(2069) in 23S rRNA + S-adenosyl-L-homocysteine + H(+). Its function is as follows. Specifically methylates the guanine in position 2445 (m2G2445) and the guanine in position 2069 (m7G2069) of 23S rRNA. This is Ribosomal RNA large subunit methyltransferase K/L from Escherichia coli (strain SMS-3-5 / SECEC).